Here is a 401-residue protein sequence, read N- to C-terminus: Enolase (401 aa).

Q154 is a binding site for (2R)-2-phosphoglycerate. E197 (proton donor) is an active-site residue. Positions 233, 274, and 301 each coordinate Mg(2+). (2R)-2-phosphoglycerate-binding residues include K326, R355, S356, and K377. Catalysis depends on K326, which acts as the Proton acceptor.

Belongs to the enolase family. Mg(2+) serves as cofactor.

It localises to the cytoplasm. The protein resides in the secreted. Its subcellular location is the cell surface. The enzyme catalyses (2R)-2-phosphoglycerate = phosphoenolpyruvate + H2O. Its pathway is carbohydrate degradation; glycolysis; pyruvate from D-glyceraldehyde 3-phosphate: step 4/5. Functionally, catalyzes the reversible conversion of 2-phosphoglycerate (2-PG) into phosphoenolpyruvate (PEP). It is essential for the degradation of carbohydrates via glycolysis. In Thermoplasma acidophilum (strain ATCC 25905 / DSM 1728 / JCM 9062 / NBRC 15155 / AMRC-C165), this protein is Enolase.